The sequence spans 1172 residues: Thrombospondin-2 (1172 aa).

Positions 1–18 are cleaved as a signal peptide; sequence MVWRLVLLALWVWPSTQA. Residues 19 to 215 form the Laminin G-like domain; that stretch reads GHQDKDTTFD…LQNVHLVFEN (197 aa). Positions 19–232 are heparin-binding; it reads GHQDKDTTFD…KKGCQQGQGA (214 aa). Residues asparagine 151, asparagine 316, and asparagine 330 are each glycosylated (N-linked (GlcNAc...) asparagine). Positions 318–375 constitute a VWFC domain; that stretch reads SACWQDGRFFAENETWVVDSCTTCTCKKFKTICHQITCPPATCASPSFVEGECCPSCL. 3 TSP type-1 domains span residues 381–431, 437–492, and 494–549; these read EEGW…SKCD, DGGW…APCP, and DGRW…RSCP. Intrachain disulfides connect cysteine 393–cysteine 425, cysteine 397–cysteine 430, cysteine 408–cysteine 415, cysteine 449–cysteine 486, cysteine 453–cysteine 491, cysteine 464–cysteine 476, cysteine 506–cysteine 543, cysteine 510–cysteine 548, cysteine 521–cysteine 533, cysteine 553–cysteine 564, cysteine 558–cysteine 574, cysteine 577–cysteine 588, cysteine 594–cysteine 610, cysteine 601–cysteine 619, cysteine 622–cysteine 646, cysteine 652–cysteine 665, cysteine 659–cysteine 678, cysteine 680–cysteine 691, cysteine 707–cysteine 715, cysteine 720–cysteine 740, cysteine 756–cysteine 776, cysteine 779–cysteine 799, cysteine 815–cysteine 835, cysteine 838–cysteine 858, cysteine 876–cysteine 896, cysteine 912–cysteine 932, and cysteine 948–cysteine 1169. A glycan (N-linked (GlcNAc...) asparagine) is linked at asparagine 457. Residues 549 to 589 form the EGF-like 1 domain; the sequence is PVDGCLSNPCFPGAQCSSFPDGSWSCGSCPVGFLGNGTHCE. The N-linked (GlcNAc...) asparagine glycan is linked to asparagine 584. The 45-residue stretch at 648–692 folds into the EGF-like 2 domain; sequence PENPCKDKTHNCHKHAECIYLGHFSDPMYKCECQTGYAGDGLICG. TSP type-3 repeat units lie at residues 693–728, 729–764, 765–787, 788–823, 824–846, 847–884, 885–920, and 921–956; these read EDSD…NSGQ, EDFD…NPRQ, ADYD…NPAQ, IDTD…NTDQ, RDTD…NPDQ, TDVD…NANQ, ADHD…NPDQ, and EDLD…AISE. N-linked (GlcNAc...) asparagine glycosylation occurs at asparagine 710. The disordered stretch occupies residues 843-931; it reads NPDQTDVDND…DLDGDGRGDI (89 aa). A compositionally biased stretch (acidic residues) spans 847-866; it reads TDVDNDLVGDQCDNNEDIDD. Residues 870 to 884 show a composition bias toward polar residues; the sequence is QNNQDNCPYISNANQ. Over residues 896-905 the composition is skewed to acidic residues; that stretch reads CDPDDDNDGV. Residues 928–930 carry the Cell attachment site motif; sequence RGD. Residues 960–1172 enclose the TSP C-terminal domain; that stretch reads RNFQMVPLDP…SDLKYECRDI (213 aa). The N-linked (GlcNAc...) asparagine glycan is linked to asparagine 1069.

The protein belongs to the thrombospondin family. As to quaternary structure, homotrimer; disulfide-linked. Interacts (via the TSP type I repeats) with CD36; the interaction conveys an antiangiogenic effect. Interacts (via the TSP type I repeats) with HRG; the interaction blocks the antiangiogenic effect of THBS2 with CD36. Can bind to fibrinogen, fibronectin, laminin and type V collagen. In terms of tissue distribution, high expression in invertebral disk tissue.

Its function is as follows. Adhesive glycoprotein that mediates cell-to-cell and cell-to-matrix interactions. Ligand for CD36 mediating antiangiogenic properties. This is Thrombospondin-2 (THBS2) from Homo sapiens (Human).